The primary structure comprises 386 residues: Succinyl-diaminopimelate desuccinylase (386 aa).

Histidine 76 lines the Zn(2+) pocket. Aspartate 78 is a catalytic residue. Aspartate 110 is a binding site for Zn(2+). Residue glutamate 144 is the Proton acceptor of the active site. Zn(2+)-binding residues include glutamate 145, glutamate 173, and histidine 359.

Belongs to the peptidase M20A family. DapE subfamily. Homodimer. Zn(2+) is required as a cofactor. It depends on Co(2+) as a cofactor.

It catalyses the reaction N-succinyl-(2S,6S)-2,6-diaminopimelate + H2O = (2S,6S)-2,6-diaminopimelate + succinate. It participates in amino-acid biosynthesis; L-lysine biosynthesis via DAP pathway; LL-2,6-diaminopimelate from (S)-tetrahydrodipicolinate (succinylase route): step 3/3. Its function is as follows. Catalyzes the hydrolysis of N-succinyl-L,L-diaminopimelic acid (SDAP), forming succinate and LL-2,6-diaminopimelate (DAP), an intermediate involved in the bacterial biosynthesis of lysine and meso-diaminopimelic acid, an essential component of bacterial cell walls. The protein is Succinyl-diaminopimelate desuccinylase of Chromohalobacter salexigens (strain ATCC BAA-138 / DSM 3043 / CIP 106854 / NCIMB 13768 / 1H11).